Here is a 451-residue protein sequence, read N- to C-terminus: mRNA cleavage and polyadenylation factor CLP1 (451 aa).

Residues E33, K72, and 133-138 (NTGKTA) each bind ATP.

It belongs to the Clp1 family. Clp1 subfamily. In terms of assembly, component of a pre-mRNA cleavage factor complex. Interacts directly with PCF11.

The protein localises to the nucleus. Required for endonucleolytic cleavage during polyadenylation-dependent pre-mRNA 3'-end formation. In Vanderwaltozyma polyspora (strain ATCC 22028 / DSM 70294 / BCRC 21397 / CBS 2163 / NBRC 10782 / NRRL Y-8283 / UCD 57-17) (Kluyveromyces polysporus), this protein is mRNA cleavage and polyadenylation factor CLP1.